A 60-amino-acid chain; its full sequence is Large ribosomal subunit protein uL30 (60 aa).

Belongs to the universal ribosomal protein uL30 family. In terms of assembly, part of the 50S ribosomal subunit.

In Leuconostoc citreum (strain KM20), this protein is Large ribosomal subunit protein uL30.